A 344-amino-acid chain; its full sequence is MVRTRPTYIYLPDTAAGWPFPRTVNPYYEETKAESEAWISSLYPFDAYVQKKFNACDFTLLASMAYPWLSKDHIRTGADLMMLFFVFDEYSDVASVKDAQEMVDIVMDALRNPHKPRPKDENILGEIAKQFWERGVKTASAPSARRFVDYFEGYLKSVVEQAQDREHNRIRSIAEYFDVRRLTVGARPSYALMELGMNIPDEVWEDPAMEIMAVCVTDMIILDNDMLSWNVEQSRGDDAHNIVRIVMEANKTDVASAMKWVEDYHNLLKKTFLDVYNSVPSWGPEVDAQVQEYARGLGNWVICNISWSFESARYFGKEGRRIREERVVAILDKPVLVGVLESDA.

Residues aspartate 88, asparagine 224, serine 228, and glutamate 232 each contribute to the Mg(2+) site. The DDXXD motif signature appears at 88–92 (DEYSD). An NSE/DTE motif motif is present at residues 224 to 232 (NDMLSWNVE). Residues arginine 313 and tyrosine 314 each coordinate (2E,6E)-farnesyl diphosphate.

The protein belongs to the terpene synthase family. Mg(2+) is required as a cofactor.

Terpene cyclase that catalyzes the cyclization of farnesyl diphosphate (FPP) to a single major sesquiterpene scaffold whose chemical structure is still unknown. This Postia placenta (strain ATCC 44394 / Madison 698-R) (Brown rot fungus) protein is Sesquiterpene synthase 9.